The chain runs to 123 residues: Small ribosomal subunit protein uS12 (123 aa).

Residues 1–30 form a disordered region; sequence MPTIQQLIRKPRQPKIKRSKSQHMEGCPQK. Basic residues predominate over residues 9–21; sequence RKPRQPKIKRSKS. The residue at position 89 (Asp89) is a 3-methylthioaspartic acid. A disordered region spans residues 104 to 123; the sequence is TQGVKDRRQRRSKYGAKRPK. The span at 110 to 123 shows a compositional bias: basic residues; the sequence is RRQRRSKYGAKRPK.

This sequence belongs to the universal ribosomal protein uS12 family. In terms of assembly, part of the 30S ribosomal subunit. Contacts proteins S8 and S17. May interact with IF1 in the 30S initiation complex.

Functionally, with S4 and S5 plays an important role in translational accuracy. Interacts with and stabilizes bases of the 16S rRNA that are involved in tRNA selection in the A site and with the mRNA backbone. Located at the interface of the 30S and 50S subunits, it traverses the body of the 30S subunit contacting proteins on the other side and probably holding the rRNA structure together. The combined cluster of proteins S8, S12 and S17 appears to hold together the shoulder and platform of the 30S subunit. This is Small ribosomal subunit protein uS12 from Jannaschia sp. (strain CCS1).